A 194-amino-acid chain; its full sequence is MTENSTSAPAAKPKRAKASKKSTDHPKYSDMIVAAIQAEKNRAGSSRQSIQKYIKSHYKVGENADSQIKLSIKRLVTTGVLKQTKGVGASGSFRLAKSDEPKKSVAFKKTKKEIKKVATPKKASKPKKAASKAPTKKPKATPVKKAKKKLAATPKKAKKPKTVKAKPVKASKPKKAKPVKPKAKSSAKRAGKKK.

Methionine 1 carries the N-acetylmethionine modification. The segment covering 1 to 11 has biased composition (low complexity); it reads MTENSTSAPAA. The interval 1 to 29 is disordered; that stretch reads MTENSTSAPAAKPKRAKASKKSTDHPKYS. Threonine 2 is subject to N-acetylthreonine; partial; in Histone H1.0, N-terminally processed. At asparagine 4 the chain carries Deamidated asparagine; partial. Residues 24 to 97 form the H15 domain; sequence DHPKYSDMIV…GASGSFRLAK (74 aa). Position 42 is a citrulline (arginine 42). Residues 84-194 form a disordered region; that stretch reads TKGVGASGSF…SSAKRAGKKK (111 aa). Serine 104 carries the post-translational modification ADP-ribosylserine. Positions 105–194 are enriched in basic residues; it reads VAFKKTKKEI…SSAKRAGKKK (90 aa).

The protein belongs to the histone H1/H5 family. In terms of processing, phosphorylated on Ser-17 in RNA edited version. Post-translationally, ADP-ribosylated on Ser-104 in response to DNA damage.

The protein localises to the nucleus. Its subcellular location is the chromosome. Functionally, histones H1 are necessary for the condensation of nucleosome chains into higher-order structures. The histones H1.0 are found in cells that are in terminal stages of differentiation or that have low rates of cell division. The chain is Histone H1.0 from Homo sapiens (Human).